The sequence spans 209 residues: Tektin bundle-interacting protein 1 (209 aa).

As to quaternary structure, microtubule inner protein component of sperm flagellar doublet microtubules.

The protein resides in the cytoplasm. It is found in the cytoskeleton. The protein localises to the cilium axoneme. It localises to the flagellum axoneme. In terms of biological role, microtubule inner protein (MIP) part of the dynein-decorated doublet microtubules (DMTs) in cilia axoneme, which is required for motile cilia beating. Located at the center of the tektin bundle where may function to recruit tektins or stabilize the bundle. The sequence is that of Tektin bundle-interacting protein 1 from Homo sapiens (Human).